Consider the following 204-residue polypeptide: GTP cyclohydrolase 1 (204 aa).

Positions 93, 96, and 164 each coordinate Zn(2+).

It belongs to the GTP cyclohydrolase I family. In terms of assembly, toroid-shaped homodecamer, composed of two pentamers of five dimers.

It catalyses the reaction GTP + H2O = 7,8-dihydroneopterin 3'-triphosphate + formate + H(+). The protein operates within cofactor biosynthesis; 7,8-dihydroneopterin triphosphate biosynthesis; 7,8-dihydroneopterin triphosphate from GTP: step 1/1. The chain is GTP cyclohydrolase 1 from Rhizobium meliloti (strain 1021) (Ensifer meliloti).